Reading from the N-terminus, the 363-residue chain is Histidinol-phosphate aminotransferase (363 aa).

Lys220 carries the N6-(pyridoxal phosphate)lysine modification.

This sequence belongs to the class-II pyridoxal-phosphate-dependent aminotransferase family. Histidinol-phosphate aminotransferase subfamily. As to quaternary structure, homodimer. Requires pyridoxal 5'-phosphate as cofactor.

It carries out the reaction L-histidinol phosphate + 2-oxoglutarate = 3-(imidazol-4-yl)-2-oxopropyl phosphate + L-glutamate. Its pathway is amino-acid biosynthesis; L-histidine biosynthesis; L-histidine from 5-phospho-alpha-D-ribose 1-diphosphate: step 7/9. In Chlorobium chlorochromatii (strain CaD3), this protein is Histidinol-phosphate aminotransferase.